Here is a 212-residue protein sequence, read N- to C-terminus: ATP phosphoribosyltransferase (212 aa).

It belongs to the ATP phosphoribosyltransferase family. Short subfamily. As to quaternary structure, heteromultimer composed of HisG and HisZ subunits.

It localises to the cytoplasm. It catalyses the reaction 1-(5-phospho-beta-D-ribosyl)-ATP + diphosphate = 5-phospho-alpha-D-ribose 1-diphosphate + ATP. It functions in the pathway amino-acid biosynthesis; L-histidine biosynthesis; L-histidine from 5-phospho-alpha-D-ribose 1-diphosphate: step 1/9. Catalyzes the condensation of ATP and 5-phosphoribose 1-diphosphate to form N'-(5'-phosphoribosyl)-ATP (PR-ATP). Has a crucial role in the pathway because the rate of histidine biosynthesis seems to be controlled primarily by regulation of HisG enzymatic activity. This Clostridium novyi (strain NT) protein is ATP phosphoribosyltransferase.